Consider the following 293-residue polypeptide: Nucleotide-binding protein HRM2_27900 (293 aa).

Position 11-18 (11-18 (GLSGSGKS)) interacts with ATP. 62 to 65 (DIRA) is a GTP binding site.

This sequence belongs to the RapZ-like family.

Functionally, displays ATPase and GTPase activities. The protein is Nucleotide-binding protein HRM2_27900 of Desulforapulum autotrophicum (strain ATCC 43914 / DSM 3382 / VKM B-1955 / HRM2) (Desulfobacterium autotrophicum).